The primary structure comprises 467 residues: Chromosomal replication initiator protein DnaA (467 aa).

Residues 1–87 (MSSSLWLQCL…VGSRPVVAPK (87 aa)) form a domain I, interacts with DnaA modulators region. Residues 87–130 (KPAPVRTAADVAAESSAPAQLAQRKPIHKTWDDDSAAADITHRS) form a domain II region. The segment at 131–347 (NVNPKHKFNN…GALNRVIANA (217 aa)) is domain III, AAA+ region. Residues Gly175, Gly177, Lys178, and Thr179 each coordinate ATP. The tract at residues 348–467 (NFTGRPITID…YSNLIRTLSS (120 aa)) is domain IV, binds dsDNA.

The protein belongs to the DnaA family. In terms of assembly, oligomerizes as a right-handed, spiral filament on DNA at oriC.

The protein resides in the cytoplasm. Plays an essential role in the initiation and regulation of chromosomal replication. ATP-DnaA binds to the origin of replication (oriC) to initiate formation of the DNA replication initiation complex once per cell cycle. Binds the DnaA box (a 9 base pair repeat at the origin) and separates the double-stranded (ds)DNA. Forms a right-handed helical filament on oriC DNA; dsDNA binds to the exterior of the filament while single-stranded (ss)DNA is stabiized in the filament's interior. The ATP-DnaA-oriC complex binds and stabilizes one strand of the AT-rich DNA unwinding element (DUE), permitting loading of DNA polymerase. After initiation quickly degrades to an ADP-DnaA complex that is not apt for DNA replication. Binds acidic phospholipids. The protein is Chromosomal replication initiator protein DnaA of Vibrio cholerae serotype O1 (strain ATCC 39315 / El Tor Inaba N16961).